The following is a 283-amino-acid chain: Aldo-keto reductase MSMEG_2407/MSMEI_2346 (283 aa).

The active-site Proton donor is the Tyr58. 11 residues coordinate NADPH: Gly196, Leu198, Val200, Ile236, Arg238, Ser239, Ala240, Arg244, Ser247, Asn248, and Arg274.

Belongs to the aldo/keto reductase family. In terms of assembly, monomer.

Inhibited by the antituberculosis drug isoniazid (INH). In terms of biological role, catalyzes the NADPH-dependent reduction of dicarbonyls. Exhibits narrow substrate specificity, with preferential activity against the dicarbonyl substrates phenylglyoxal and methylglyoxal. Exhibits weak activity with ethyl-2-methyl acetoacetate. Cannot use NADH. May play an important role in the detoxification of methylglyoxal. This Mycolicibacterium smegmatis (strain ATCC 700084 / mc(2)155) (Mycobacterium smegmatis) protein is Aldo-keto reductase MSMEG_2407/MSMEI_2346.